Consider the following 328-residue polypeptide: tRNA-modifying protein YgfZ (328 aa).

Residues Trp-28 and Trp-190 each contribute to the folate site.

This sequence belongs to the tRNA-modifying YgfZ family.

It is found in the cytoplasm. Folate-binding protein involved in regulating the level of ATP-DnaA and in the modification of some tRNAs. It is probably a key factor in regulatory networks that act via tRNA modification, such as initiation of chromosomal replication. This is tRNA-modifying protein YgfZ from Sodalis glossinidius (strain morsitans).